A 313-amino-acid chain; its full sequence is Cytochrome c biogenesis protein CcsA (313 aa).

8 helical membrane-spanning segments follow: residues I9–F29, G44–G64, L71–F91, G111–L131, M143–I163, V217–N237, W244–L264, and A278–L298.

It belongs to the CcmF/CycK/Ccl1/NrfE/CcsA family. As to quaternary structure, may interact with Ccs1.

It is found in the plastid. Its subcellular location is the chloroplast thylakoid membrane. Functionally, required during biogenesis of c-type cytochromes (cytochrome c6 and cytochrome f) at the step of heme attachment. This is Cytochrome c biogenesis protein CcsA from Solanum bulbocastanum (Wild potato).